The primary structure comprises 899 residues: Semaphorin-1A (899 aa).

Positions 1–20 (MLNSHNTNHNNNSASNSNYN) are enriched in low complexity. A disordered region spans residues 1-24 (MLNSHNTNHNNNSASNSNYNKGHK). The Cytoplasmic portion of the chain corresponds to 1-40 (MLNSHNTNHNNNSASNSNYNKGHKMHLKSATAKATIMKHK). The chain crosses the membrane as a helical span at residues 41-61 (LSKFYGYGWMQVFLLLTVLVI). Topologically, residues 62–657 (GNQSAWQENI…INAQYTVETL (596 aa)) are extracellular. Asparagine 63, asparagine 90, and asparagine 117 each carry an N-linked (GlcNAc...) asparagine glycan. Residues 74-543 (KLYVELGPED…TDSQVVAIQL (470 aa)) enclose the Sema domain. Cystine bridges form between cysteine 141–cysteine 151 and cysteine 169–cysteine 178. N-linked (GlcNAc...) asparagine glycans are attached at residues asparagine 187, asparagine 207, and asparagine 311. Cystine bridges form between cysteine 288-cysteine 402 and cysteine 312-cysteine 361. Residue asparagine 404 is glycosylated (N-linked (GlcNAc...) asparagine). A helical membrane pass occupies residues 658 to 678 (VMAVLAGSIFSLLVGFFTGYF). Over 679-899 (CGRRCHKDED…PKNCSYIYRD (221 aa)) the chain is Cytoplasmic. Disordered regions lie at residues 735-766 (VLLPQPPPPNKMHSPKNTLRKPPMHQMHQGPN) and 798-899 (VMGD…IYRD). Residues 809–827 (FSTTRSVKKAVNNTNTRNR) are compositionally biased toward polar residues. A compositionally biased stretch (basic residues) spans 828 to 837 (SLGRARRQPP). The segment covering 847–876 (SNSPQQQQQQSQQPHSSSGSSPVMSNSSSS) has biased composition (low complexity).

This sequence belongs to the semaphorin family. In terms of tissue distribution, expressed by subsets of neurons and muscles.

It is found in the cell membrane. Its function is as follows. Involved in growth cone guidance through its role in axonal repulsion. Function in neurons is essential for adult survival, motor neuron survival, and is important for climbing behavior and activity. The chain is Semaphorin-1A from Drosophila melanogaster (Fruit fly).